The following is a 108-amino-acid chain: Malonate decarboxylase acyl carrier protein (108 aa).

Ser-35 bears the O-(phosphoribosyl dephospho-coenzyme A)serine mark.

It belongs to the MdcC family. In terms of processing, covalently binds the prosthetic group of malonate decarboxylase.

It localises to the cytoplasm. Its function is as follows. Subunit of malonate decarboxylase, it is an acyl carrier protein to which acetyl and malonyl thioester residues are bound via a 2'-(5''-phosphoribosyl)-3'-dephospho-CoA prosthetic group and turn over during the catalytic mechanism. This Burkholderia cepacia (Pseudomonas cepacia) protein is Malonate decarboxylase acyl carrier protein.